We begin with the raw amino-acid sequence, 418 residues long: Putative ion-transport protein YfeO (418 aa).

11 consecutive transmembrane segments (helical) span residues 9–31 (MLLLSLPAVAIGIASSLILIMVM), 55–77 (SPLWIIGVLTLTGIAVGLVIRFS), 90–112 (LIGAPIPPSALPGLIVALILGLA), 122–140 (PIITVNIALAVAIGARLLP), 147–169 (WTILASAGTIGALFGTPVAAALI), 189–211 (PLMAAAAGALTTGLFFHPHFSLP), 223–244 (ILSGAIVAAIAIAAGMVAVWCL), 259–281 (FVLGIGGFILGILGVIGGPVSLF), 301–323 (YFLLAVIKLAALVVAAASGFRGG), 343–363 (VPAVPAAITVSCAILGIVLVV), and 376–398 (VVVPNTTLLPLLCIVMLPAWLLL).

The protein belongs to the chloride channel (TC 2.A.49) family.

It localises to the cell membrane. In Escherichia coli O6:H1 (strain CFT073 / ATCC 700928 / UPEC), this protein is Putative ion-transport protein YfeO (yfeO).